Reading from the N-terminus, the 799-residue chain is Sodium- and chloride-dependent glycine transporter 2 (799 aa).

Positions 1–64 (MDCSAPKEMN…RSASTGAQTF (64 aa)) are disordered. Residues 1-201 (MDCSAPKEMN…ARGNWSSKLD (201 aa)) are Cytoplasmic-facing. Low complexity predominate over residues 40-57 (PAAAPAAAVQPPRVPRSA). Ser-58 carries the phosphoserine modification. Residue Thr-59 is modified to Phosphothreonine. Ser-86 is modified (phosphoserine). The next 3 helical transmembrane spans lie at 202–222 (FILSMVGYAVGLGNVWRFPYL), 230–249 (AFLIPYLMMLALAGLPIFFL), and 273–293 (GCGIAMLIISVLIAIYYNVII). Na(+) contacts are provided by Gly-208, Ala-210, Val-211, and Asn-215. The Extracellular segment spans residues 294–395 (CYTLFYLFAS…AGIEYPGEIR (102 aa)). A disulfide bridge connects residues Cys-313 and Cys-322. Asn-345, Asn-355, Asn-360, and Asn-366 each carry an N-linked (GlcNAc...) asparagine glycan. 5 helical membrane-spanning segments follow: residues 396 to 414 (WPLAFCLFLAWVIVYASLA), 423 to 440 (VVYFTATFPYVVLVILLI), 476 to 493 (IFFSLSAAWGGLITLSSY), 505 to 526 (LIVTCTNSATSIFAGFVIFSVI), and 559 to 578 (LPLSPFWAIIFFLMLLTLGL). Na(+) is bound by residues Ser-479, Asn-511, Leu-576, and Asp-579. Helical transmembrane passes span 606–624 (VFTLGCCICFFIMGFPMIT), 640–660 (SYALVIIAIFELVGISYVYGL), 681–700 (VCWAFVTPTILTFILCFSFY), and 719–737 (LGWLMLACSVIWIPIMFVI). Residues 738 to 799 (KMYLAPGRFI…VKDLELGTQC (62 aa)) lie on the Cytoplasmic side of the membrane.

This sequence belongs to the sodium:neurotransmitter symporter (SNF) (TC 2.A.22) family. SLC6A5 subfamily. In terms of processing, N-glycosylated. As to expression, specifically expressed in spinal cord, brain stem, and to a lesser extent in the cerebellum.

The protein localises to the cell membrane. It catalyses the reaction glycine(out) + chloride(out) + 3 Na(+)(out) = glycine(in) + chloride(in) + 3 Na(+)(in). Functionally, sodium- and chloride-dependent glycine transporter. Terminates the action of glycine by its high affinity sodium-dependent reuptake into presynaptic terminals. May be responsible for the termination of neurotransmission at strychnine-sensitive glycinergic synapses. The protein is Sodium- and chloride-dependent glycine transporter 2 (Slc6a5) of Rattus norvegicus (Rat).